A 296-amino-acid polypeptide reads, in one-letter code: Formamidopyrimidine-DNA glycosylase (296 aa).

The active-site Schiff-base intermediate with DNA is P2. The active-site Proton donor is E3. K61 serves as the catalytic Proton donor; for beta-elimination activity. DNA-binding residues include H104, R128, and K174. An FPG-type zinc finger spans residues 260-294 (HAYGQQGQACDRCGSNIIREKFANRSSHFCPRCQL). R284 (proton donor; for delta-elimination activity) is an active-site residue.

This sequence belongs to the FPG family. In terms of assembly, monomer. Zn(2+) serves as cofactor.

It catalyses the reaction Hydrolysis of DNA containing ring-opened 7-methylguanine residues, releasing 2,6-diamino-4-hydroxy-5-(N-methyl)formamidopyrimidine.. The catalysed reaction is 2'-deoxyribonucleotide-(2'-deoxyribose 5'-phosphate)-2'-deoxyribonucleotide-DNA = a 3'-end 2'-deoxyribonucleotide-(2,3-dehydro-2,3-deoxyribose 5'-phosphate)-DNA + a 5'-end 5'-phospho-2'-deoxyribonucleoside-DNA + H(+). Involved in base excision repair of DNA damaged by oxidation or by mutagenic agents. Acts as a DNA glycosylase that recognizes and removes damaged bases. Has a preference for oxidized purines, such as 7,8-dihydro-8-oxoguanine (8-oxoG). Has AP (apurinic/apyrimidinic) lyase activity and introduces nicks in the DNA strand. Cleaves the DNA backbone by beta-delta elimination to generate a single-strand break at the site of the removed base with both 3'- and 5'-phosphates. This chain is Formamidopyrimidine-DNA glycosylase, found in Corynebacterium diphtheriae (strain ATCC 700971 / NCTC 13129 / Biotype gravis).